The following is a 126-amino-acid chain: Large ribosomal subunit protein uL22 (126 aa).

This sequence belongs to the universal ribosomal protein uL22 family. In terms of assembly, part of the 50S ribosomal subunit.

Its function is as follows. This protein binds specifically to 23S rRNA; its binding is stimulated by other ribosomal proteins, e.g. L4, L17, and L20. It is important during the early stages of 50S assembly. It makes multiple contacts with different domains of the 23S rRNA in the assembled 50S subunit and ribosome. Functionally, the globular domain of the protein is located near the polypeptide exit tunnel on the outside of the subunit, while an extended beta-hairpin is found that lines the wall of the exit tunnel in the center of the 70S ribosome. The polypeptide is Large ribosomal subunit protein uL22 (Cereibacter sphaeroides (strain ATCC 17029 / ATH 2.4.9) (Rhodobacter sphaeroides)).